Consider the following 1004-residue polypeptide: Liprin-beta homolog (1004 aa).

Composition is skewed to low complexity over residues 50-63 (NGNS…TIGS) and 149-161 (SPPS…SSSL). 2 disordered regions span residues 50-122 (NGNS…RSSR) and 135-161 (HRTD…SSSL). Coiled-coil stretches lie at residues 280-328 (CQEL…VNQS) and 364-396 (DEMS…ALDE). Disordered regions lie at residues 341 to 366 (HTNG…DDEM), 432 to 497 (PSDS…GGNQ), 528 to 550 (NGNE…GKAS), and 648 to 686 (FSKL…LGTV). Positions 434 to 453 (DSMSHSTSFPVSLSSTTSNG) are enriched in polar residues. A compositionally biased stretch (low complexity) spans 458–474 (STVQSSSSYNSSLSAVS). Polar residues-rich tracts occupy residues 531-541 (EGANHNYSSAS) and 648-684 (FSKL…NHLG). 3 SAM domains span residues 698 to 762 (WRSE…IEED), 770 to 833 (WDVH…LKKA), and 858 to 930 (VVRW…LLGP).

Belongs to the liprin family. Liprin-beta subfamily. As to expression, expressed in pharyngeal muscle, particularly posterior bulb, adjacent to the dorsal and ventral cord (but not in ventral cord neurons), and in body wall muscles.

In terms of biological role, involved in the regulation of synaptic function at neuromuscular junctions. Together with the liprin-alpha protein syd-2, may play a role in regulating the structure of the neuronal region, called the active zone, from which synaptic vesicles send neurotransmitter signals across the synapse. Does not seem to be required for neuronal development. May regulate the disassembly of focal adhesions. Does not bind receptor-like tyrosine phosphatases type 2A. The chain is Liprin-beta homolog from Caenorhabditis elegans.